Consider the following 417-residue polypeptide: Methyltransferase/ribosomally synthesized cyclic peptide dendrothelin A precursor dbihMA (417 aa).

The interval 1–251 (MESSTQTKPG…GVSTFYIPPK (251 aa)) is methyltransferase domain. Active-site residues include Arg-72, Tyr-76, and Tyr-98. The S-adenosyl-L-methionine site is built by Tyr-98, His-100, Val-103, Ala-130, Gln-172, Ala-213, Ser-244, and Thr-245. Residues 252–378 (ARKDINTDII…WAIRCAMKNM (127 aa)) are clasp domain. Residues 379–399 (PSSLLEAASQSVEEASMNGFP) are precursor leader. An N-methylvaline mark is found at Val-401 and Val-403. Residue Thr-404 is modified to N-methylthreonine. Residue Gly-405 is modified to N-methylglycine. Ile-406 is modified (N-methylisoleucine). Residue Val-407 is modified to N-methylvaline. Gly-408 carries the post-translational modification N-methylglycine. Ile-410 is modified (N-methylisoleucine). Position 411 is an N-methylglycine (Gly-411). Val-413 carries the N-methylvaline modification.

The protein in the N-terminal section; belongs to the precorrin methyltransferase family. Homodimer. In terms of processing, dbiMA automethylates at Val-401, Val-403, Thr-404, Gly-405, Ile-406, Val-407, Gly-408, Ile-410, Gly-411 and Val-413 before being processed by the prolyloligopeptidase dbiP which likely forms a peptidyl ester upon removal of the follower propeptide, which then undergoes macrocyclization with the N-terminus of the modified core peptide. Peptide backbone alpha-N-methylations change the physicochemical properties of amide bonds to provide structural constraints and other favorable characteristics including biological membrane permeability to peptides.

It functions in the pathway mycotoxin biosynthesis. Functionally, fusion protein of the methyltransferase dbiM and the dendrothelin core peptide; part of the gene cluster that mediates the biosynthesis of dendrothelin A, a highly methylated cyclic dodecapeptide showing slight nematodicidal activity. Dendrothelin A derives from the C-terminus of the dbiMA protein, and it is the dbiMA protein that methylates its own C-terminus using S-adenosyl methionine (SAM). The C-terminus is subsequently cleaved off and macrocyclized by the prolyloligopeptidase dbiP to give the final product. This chain is Methyltransferase/ribosomally synthesized cyclic peptide dendrothelin A precursor dbihMA, found in Dendrothele bispora (strain CBS 962.96).